The primary structure comprises 468 residues: Tubulin gamma chain (468 aa).

142–148 (AGGTGSG) is a GTP binding site.

This sequence belongs to the tubulin family.

It is found in the cytoplasm. It localises to the cytoskeleton. Its subcellular location is the microtubule organizing center. Tubulin is the major constituent of microtubules. The gamma chain is found at microtubule organizing centers (MTOC) such as the spindle poles, suggesting that it is involved in the minus-end nucleation of microtubule assembly. This chain is Tubulin gamma chain (TUBG), found in Chlamydomonas reinhardtii (Chlamydomonas smithii).